The primary structure comprises 430 residues: Adenylosuccinate synthetase (430 aa).

GTP-binding positions include 13-19 (GDEGKGK) and 41-43 (GHT). Residue Asp-14 is the Proton acceptor of the active site. Mg(2+)-binding residues include Asp-14 and Gly-41. IMP contacts are provided by residues 14-17 (DEGK), 39-42 (NAGH), Thr-130, Arg-144, Gln-225, Thr-240, and Arg-304. Residue His-42 is the Proton donor of the active site. Residue 300-306 (STTGRAR) participates in substrate binding. GTP-binding positions include Arg-306, 332–334 (KLD), and 414–416 (STG).

Belongs to the adenylosuccinate synthetase family. In terms of assembly, homodimer. Requires Mg(2+) as cofactor.

Its subcellular location is the cytoplasm. The enzyme catalyses IMP + L-aspartate + GTP = N(6)-(1,2-dicarboxyethyl)-AMP + GDP + phosphate + 2 H(+). It participates in purine metabolism; AMP biosynthesis via de novo pathway; AMP from IMP: step 1/2. In terms of biological role, plays an important role in the de novo pathway of purine nucleotide biosynthesis. Catalyzes the first committed step in the biosynthesis of AMP from IMP. This Thioalkalivibrio sulfidiphilus (strain HL-EbGR7) protein is Adenylosuccinate synthetase.